A 237-amino-acid chain; its full sequence is Orotidine 5'-phosphate decarboxylase (237 aa).

Residues Asp-17, Lys-39, 66–75 (DLKLHDIGNT), Thr-121, Arg-182, Gln-191, Gly-211, and Arg-212 contribute to the substrate site. The active-site Proton donor is Lys-68.

The protein belongs to the OMP decarboxylase family. Type 1 subfamily. Homodimer.

The enzyme catalyses orotidine 5'-phosphate + H(+) = UMP + CO2. The protein operates within pyrimidine metabolism; UMP biosynthesis via de novo pathway; UMP from orotate: step 2/2. Its function is as follows. Catalyzes the decarboxylation of orotidine 5'-monophosphate (OMP) to uridine 5'-monophosphate (UMP). The protein is Orotidine 5'-phosphate decarboxylase of Rhodopseudomonas palustris (strain ATCC BAA-98 / CGA009).